Here is a 330-residue protein sequence, read N- to C-terminus: Protein-lysine N-methyltransferase EEF2KMT (330 aa).

N-acetylmethionine is present on Met1. S-adenosyl-L-methionine is bound by residues Trp139, 165–167, Trp228, and Ala247; that span reads GSG.

This sequence belongs to the class I-like SAM-binding methyltransferase superfamily. EEF2KMT family. In terms of assembly, interacts with FAM86B2 and FAM86C1P.

It is found in the cytoplasm. It carries out the reaction L-lysyl-[protein] + 3 S-adenosyl-L-methionine = N(6),N(6),N(6)-trimethyl-L-lysyl-[protein] + 3 S-adenosyl-L-homocysteine + 3 H(+). Its function is as follows. Catalyzes the trimethylation of eukaryotic elongation factor 2 (EEF2) on 'Lys-525'. The protein is Protein-lysine N-methyltransferase EEF2KMT of Homo sapiens (Human).